Consider the following 883-residue polypeptide: Phosphoenolpyruvate carboxylase (883 aa).

Residues His-138 and Lys-546 contribute to the active site.

This sequence belongs to the PEPCase type 1 family. Mg(2+) serves as cofactor.

The catalysed reaction is oxaloacetate + phosphate = phosphoenolpyruvate + hydrogencarbonate. Functionally, forms oxaloacetate, a four-carbon dicarboxylic acid source for the tricarboxylic acid cycle. The polypeptide is Phosphoenolpyruvate carboxylase (Salmonella choleraesuis (strain SC-B67)).